Here is a 1300-residue protein sequence, read N- to C-terminus: ATP-dependent RNA helicase HrpA (1300 aa).

Residues 87-250 enclose the Helicase ATP-binding domain; the sequence is LEAIRDHQVV…FNNAPIIEVS (164 aa). An ATP-binding site is contributed by 100-107; it reads GETGSGKT. The short motif at 197-200 is the DEAH box element; sequence DEAH. Residues 274-444 form the Helicase C-terminal domain; that stretch reads QLQAIFDAVD…SVILQMTALG (171 aa).

The protein belongs to the DEAD box helicase family. DEAH subfamily.

It catalyses the reaction ATP + H2O = ADP + phosphate + H(+). Functionally, not yet known. This Escherichia coli (strain K12) protein is ATP-dependent RNA helicase HrpA (hrpA).